The chain runs to 1003 residues: MIMTVSDPGGSSMSSSSAITPESEQAMAAVNDAPVGGQLLQQRLALVEDLWQTVLRSECPAEQAERLLRMKQLSDPVLPEGNAVSSDALVSLIRDMDLSEAIAAARAFSLYFQLVNILEQRIEEDGYLESIVRSQDTAEQINPFTPPLATQTEPATFRELFERLRRLNVPPAQLETLLQELDIRLVFTAHPTEIVRHTVRHKQRRVASLLQQLEAQTESSTFEAGTIRLQLEEEIRLWWRTDELHQFKPSVLDEVDYALHYFQQVLFDAMPQLRRRLSSALASSYPDVQLPPSSFCTFGSWVGSDRDGNPSVTTDITWRTACYQRQLMLERYVSAVQGLRDQLSISMQWSQVSAPLLESLEMDRLRFPEVYEERATRYRLEPYRLKLSFVLERLRLTQIRNQQLAEAGWRAPADGLLSSNPEAPQSESLHYGSVAEFRSDLELIRTSLVSTDLTCEPLDTLLTQVHIFGFSLAGLDIRQESTRHSDALDEVSRYLNPDQAYGDLNEQERVQWLLQELQTRRPLIPPSVSWSPTTEETVDVFRTLHRLQDEFGSRICRTYVISMSHSVSDLLEVLLLSKEAGLVEPSAGHADLLVVPLFETVEDLQRAPEVMEELFQTPLYRNLLPRVGSQGQPLQELMLGYSDSNKDSGFLSSNWEIHKAQIALQDLAARNGVALRLFHGRGGSVGRGGGPAYQAILAQPSGTLQGRIKITEQGEVLASKYSLPELALYNLETVSTAVVQNSLVTNQLDATPSWNDLMARLARCSRRHYRALVHDNPDLVAFFEQVTPIEEISKLQISSRPARRKTGTRDLSSLRAIPWVFGWTQSRFLLPSWFGVGTALHEELVNDPDQMSLLRTLHQRWPFFRMLISKVEMTLSKVDLDLARHYVTSLGSADHRQAFDGIYTTIAEEYSLTHRLVLEITGQERLLDADPALQLSVDLRNRTIVPLGFLQVALLRRLRDQNRQPPMSESPSDGDGRTYSRSELLRGALLTINGIAAGMRNTG.

Residues 1–24 (MIMTVSDPGGSSMSSSSAITPESE) are disordered. Active-site residues include His190 and Lys646.

The protein belongs to the PEPCase type 1 family. Mg(2+) is required as a cofactor.

The catalysed reaction is oxaloacetate + phosphate = phosphoenolpyruvate + hydrogencarbonate. Functionally, forms oxaloacetate, a four-carbon dicarboxylic acid source for the tricarboxylic acid cycle. This is Phosphoenolpyruvate carboxylase from Synechococcus sp. (strain WH7803).